Reading from the N-terminus, the 59-residue chain is Photosystem II reaction center protein K (59 aa).

Residues 1–22 (MILYSHLSTLIDIDLSNNIFLA) constitute a propeptide that is removed on maturation. The chain crosses the membrane as a helical span at residues 30–50 (IFDPLVDVMPVIPVFFLLLAF).

Belongs to the PsbK family. In terms of assembly, PSII is composed of 1 copy each of membrane proteins PsbA, PsbB, PsbC, PsbD, PsbE, PsbF, PsbH, PsbI, PsbJ, PsbK, PsbL, PsbM, PsbT, PsbX, PsbY, PsbZ, Psb30/Ycf12, at least 3 peripheral proteins of the oxygen-evolving complex and a large number of cofactors. It forms dimeric complexes.

It localises to the plastid. Its subcellular location is the chloroplast thylakoid membrane. Its function is as follows. One of the components of the core complex of photosystem II (PSII). PSII is a light-driven water:plastoquinone oxidoreductase that uses light energy to abstract electrons from H(2)O, generating O(2) and a proton gradient subsequently used for ATP formation. It consists of a core antenna complex that captures photons, and an electron transfer chain that converts photonic excitation into a charge separation. The protein is Photosystem II reaction center protein K of Chara vulgaris (Common stonewort).